Here is a 343-residue protein sequence, read N- to C-terminus: Palmitoyltransferase ZDHHC4 (343 aa).

Residues 1 to 2 (MD) are Lumenal-facing. Residues 3-23 (FLVLFLLYLALVLLGFVMICI) traverse the membrane as a helical segment. At 24–67 (GSKTHYLQGLISRGAQVFSYIIPECLQRAMLSVLHYLFHTRNYT) the chain is on the cytoplasmic side. A helical membrane pass occupies residues 68–88 (FVVLHLILQGMVYTEYTWEIF). The Lumenal segment spans residues 89–95 (GLCQQLE). The helical transmembrane segment at 96–116 (FSLYYLFLPYLLLIVNLLFFT) threads the bilayer. Over 117–196 (LSCVTNPGTI…GAWNTRYFLS (80 aa)) the chain is Cytoplasmic. Positions 149–199 (VRCPTCDLRKPARSKHCSVCNRCVHRFDHHCVWVNNCIGAWNTRYFLSYLF) constitute a DHHC domain. The active-site S-palmitoyl cysteine intermediate is Cys179. A helical transmembrane segment spans residues 197–217 (YLFTLTASAATMAVVSTVFLV). The Lumenal segment spans residues 218 to 255 (RLVVMSDVYLQTYVDDLGHLQVVDTVFLVQYLFLTFPR). A helical transmembrane segment spans residues 256-276 (IVFLVGFVVVLSFLLGGYLCF). Over 277–343 (CLYLAATNQT…ATACYERKEK (67 aa)) the chain is Cytoplasmic. Positions 340-343 (RKEK) match the Di-lysine motif motif.

Belongs to the DHHC palmitoyltransferase family. In terms of assembly, interacts with CPT1A.

It is found in the endoplasmic reticulum membrane. The protein resides in the golgi apparatus membrane. Its subcellular location is the cell membrane. The catalysed reaction is L-cysteinyl-[protein] + hexadecanoyl-CoA = S-hexadecanoyl-L-cysteinyl-[protein] + CoA. In terms of biological role, palmitoyltransferase that could catalyze the addition of palmitate onto protein substrates including the D(2) dopamine receptor DRD2, GSK3B or MAVS. Mediates GSK3B palmitoylation to prevent its AKT1-mediated phosphorylation leading to activation of the STAT3 signaling pathway. Also catalyzes MAVS palmitoylation which promotes its stabilization and activation by inhibiting 'Lys-48'- but facilitating 'Lys-63'-linked ubiquitination. The sequence is that of Palmitoyltransferase ZDHHC4 from Bos taurus (Bovine).